A 528-amino-acid polypeptide reads, in one-letter code: Ribonuclease Y (528 aa).

The chain crosses the membrane as a helical span at residues 15-35 (SLLVFALICGSIIGYFLYSFF). The KH domain maps to 217 to 277 (NISVVNIPNE…IRREIAKKTL (61 aa)). The region spanning 343–436 (VLKHSLEVAF…VAIADTLSSA (94 aa)) is the HD domain.

The protein belongs to the RNase Y family.

It localises to the cell membrane. Its function is as follows. Endoribonuclease that initiates mRNA decay. In Onion yellows phytoplasma (strain OY-M), this protein is Ribonuclease Y.